The following is a 156-amino-acid chain: ATP synthase subunit b (156 aa).

The helical transmembrane segment at 7–27 (LIGQLIAFALFVAFCMKFVWP) threads the bilayer.

It belongs to the ATPase B chain family. As to quaternary structure, F-type ATPases have 2 components, F(1) - the catalytic core - and F(0) - the membrane proton channel. F(1) has five subunits: alpha(3), beta(3), gamma(1), delta(1), epsilon(1). F(0) has three main subunits: a(1), b(2) and c(10-14). The alpha and beta chains form an alternating ring which encloses part of the gamma chain. F(1) is attached to F(0) by a central stalk formed by the gamma and epsilon chains, while a peripheral stalk is formed by the delta and b chains.

It localises to the cell inner membrane. Its function is as follows. F(1)F(0) ATP synthase produces ATP from ADP in the presence of a proton or sodium gradient. F-type ATPases consist of two structural domains, F(1) containing the extramembraneous catalytic core and F(0) containing the membrane proton channel, linked together by a central stalk and a peripheral stalk. During catalysis, ATP synthesis in the catalytic domain of F(1) is coupled via a rotary mechanism of the central stalk subunits to proton translocation. Functionally, component of the F(0) channel, it forms part of the peripheral stalk, linking F(1) to F(0). This is ATP synthase subunit b from Actinobacillus pleuropneumoniae serotype 5b (strain L20).